Consider the following 130-residue polypeptide: Large ribosomal subunit protein bL17 (130 aa).

Belongs to the bacterial ribosomal protein bL17 family. Part of the 50S ribosomal subunit. Contacts protein L32.

This is Large ribosomal subunit protein bL17 from Shewanella halifaxensis (strain HAW-EB4).